Consider the following 238-residue polypeptide: MQEASSAAAAGAEPGRRAAQHQFAGVDLRRPKGYAAPAPAPAVGEGDPCPRCASRDTKFCYYNNYNTSQPRHFCKGCRRYWTKGGTLRNVPVGGGTRKKPSSSSSSSSYVAAADADRQPKKKPASKKRRVVAPAPELATAADPGKTATTTTTTSEITTETGALEDSDSLAHLLLQPGTEDAEAVALGLGLSDFPSAGKAVLDDEDSFVWPAASFDMGACWAGAGFADPDPACIFLNLP.

Residues 1-13 are compositionally biased toward low complexity; that stretch reads MQEASSAAAAGAE. Residues 1–48 are disordered; that stretch reads MQEASSAAAAGAEPGRRAAQHQFAGVDLRRPKGYAAPAPAPAVGEGDP. A Dof-type zinc finger spans residues 47 to 101; the sequence is DPCPRCASRDTKFCYYNNYNTSQPRHFCKGCRRYWTKGGTLRNVPVGGGTRKKPS. Cys49, Cys52, Cys74, and Cys77 together coordinate Zn(2+). The interval 85 to 155 is disordered; the sequence is GTLRNVPVGG…TATTTTTTSE (71 aa). The segment covering 119–130 has biased composition (basic residues); that stretch reads PKKKPASKKRRV. The segment covering 138-155 has biased composition (low complexity); the sequence is ATAADPGKTATTTTTTSE.

Expressed in all tissues examined.

The protein resides in the nucleus. Its function is as follows. Transcription factor that binds specifically to a 5'-AA[AG]G-3' consensus core sequence at the MNF1-binding site. The chain is Dof zinc finger protein MNB1A (MNB1A) from Zea mays (Maize).